The chain runs to 541 residues: Sorting nexin-27 (541 aa).

Residues 1-26 (MADEDGEGIHPAAPHRNGGGGGGGGS) form a disordered region. The segment covering 17–26 (NGGGGGGGGS) has biased composition (gly residues). The 94-residue stretch at 43 to 136 (VVRIVKSESG…ELILTVLSVP (94 aa)) folds into the PDZ domain. A phosphoserine mark is found at Ser51 and Ser62. A PX domain is found at 161–269 (QAVPISVPTY…EFLSESDENY (109 aa)). Residues 273–362 (SDVELRVALP…TCLTIRKWLF (90 aa)) enclose the Ras-associating domain. The segment at 273-362 (SDVELRVALP…TCLTIRKWLF (90 aa)) is FERM-like region F1. The tract at residues 373–421 (NDLAVTYFFHQAVDDVKKGYIKAEEKSYQLQKLYEQRKMVMYLNMLRTC) is FERM-like region F2. Residues 425 to 525 (NEIIFPHCAC…RVFCELKWRK (101 aa)) form an FERM-like region F3 region.

As to quaternary structure, core component of the SNX27-retromer, a multiprotein complex composed of SNX27, the WASH complex and the retromer complex. Interacts (via PDZ domain) with a number of target transmembrane proteins (via PDZ-binding motif): ABCC4, ADRB2, ARHGEF7, GRIA1, GRIA2, GRIN1, GRIN2A GRIN2C, KCNJ6, KCNJ9 and SLC2A1/GLUT1. Interacts (via the FERM-like regions) with the WASH complex. Interacts with SNX1. Interacts with CYTIP. Interacts with DGKZ. Interacts with MCC. Interacts (via PDZ domains) with SLC9A3; directs SLC9A3 membrane insertion from early endosomes to the plasma membrane.

Its subcellular location is the early endosome membrane. The protein localises to the cytoplasm. The protein resides in the cytosol. In terms of biological role, involved in the retrograde transport from endosome to plasma membrane, a trafficking pathway that promotes the recycling of internalized transmembrane proteins. Following internalization, endocytosed transmembrane proteins are delivered to early endosomes and recycled to the plasma membrane instead of being degraded in lysosomes. SNX27 specifically binds and directs sorting of a subset of transmembrane proteins containing a PDZ-binding motif at the C-terminus: following interaction with target transmembrane proteins, associates with the retromer complex, preventing entry into the lysosomal pathway, and promotes retromer-tubule based plasma membrane recycling. SNX27 also binds with the WASH complex. Interacts with membranes containing phosphatidylinositol-3-phosphate (PtdIns(3P)). May participate in establishment of natural killer cell polarity. Recruits CYTIP to early endosomes. The chain is Sorting nexin-27 (SNX27) from Bos taurus (Bovine).